Reading from the N-terminus, the 79-residue chain is uncharacterized protein (79 aa).

The region spanning 10 to 60 (EAVLTMDSKGQILLPKELRERAGLKAGDRLVAIAGCDENEEVCCLILVKAE) is the SpoVT-AbrB domain.

This is an uncharacterized protein from Archaeoglobus fulgidus (strain ATCC 49558 / DSM 4304 / JCM 9628 / NBRC 100126 / VC-16).